A 1409-amino-acid chain; its full sequence is DNA-directed RNA polymerase subunit beta' (1409 aa).

Zn(2+) contacts are provided by cysteine 70, cysteine 72, cysteine 85, and cysteine 88. Residues aspartate 458, aspartate 460, and aspartate 462 each coordinate Mg(2+). The Zn(2+) site is built by cysteine 813, cysteine 887, cysteine 894, and cysteine 897. The span at 1385 to 1403 (EAAELAGSTSDVSTTADAS) shows a compositional bias: low complexity. The segment at 1385–1409 (EAAELAGSTSDVSTTADASEGAASE) is disordered.

It belongs to the RNA polymerase beta' chain family. As to quaternary structure, the RNAP catalytic core consists of 2 alpha, 1 beta, 1 beta' and 1 omega subunit. When a sigma factor is associated with the core the holoenzyme is formed, which can initiate transcription. Mg(2+) serves as cofactor. It depends on Zn(2+) as a cofactor.

It catalyses the reaction RNA(n) + a ribonucleoside 5'-triphosphate = RNA(n+1) + diphosphate. Its function is as follows. DNA-dependent RNA polymerase catalyzes the transcription of DNA into RNA using the four ribonucleoside triphosphates as substrates. In Variovorax paradoxus (strain S110), this protein is DNA-directed RNA polymerase subunit beta'.